The chain runs to 220 residues: MPLTGVGPGSCRRQIIRALCLLLLLLHAGSAKNIWKRALPARLAEKSRAEEAGAPGGPRQPRADRCPPPPRTLPPGACQAARCQADSECPRHRRCCYNGCAYACLEAVPPPPVLDWLVQPKPRWLGGNGWLLDGPEEVLQAEACSTTEDGAEPLLCPSGYECHILSPGDVAEGIPNRGQCVKQRRQADGRILRHKLYKEYPEGDSKNVAEPGRGQQKHFQ.

A signal peptide spans 1–31 (MPLTGVGPGSCRRQIIRALCLLLLLLHAGSA). Residues 46–70 (KSRAEEAGAPGGPRQPRADRCPPPP) are disordered. The WAP domain maps to 59–108 (RQPRADRCPPPPRTLPPGACQAARCQADSECPRHRRCCYNGCAYACLEAV). 4 cysteine pairs are disulfide-bonded: cysteine 66/cysteine 96, cysteine 78/cysteine 100, cysteine 83/cysteine 95, and cysteine 89/cysteine 104. A disordered region spans residues 199–220 (EYPEGDSKNVAEPGRGQQKHFQ).

The protein resides in the secreted. Its function is as follows. Has growth inhibitory activity. The polypeptide is WAP four-disulfide core domain protein 1 (WFDC1) (Homo sapiens (Human)).